Consider the following 123-residue polypeptide: ATP synthase epsilon chain (123 aa).

This sequence belongs to the ATPase epsilon chain family. In terms of assembly, F-type ATPases have 2 components, CF(1) - the catalytic core - and CF(0) - the membrane proton channel. CF(1) has five subunits: alpha(3), beta(3), gamma(1), delta(1), epsilon(1). CF(0) has three main subunits: a, b and c.

The protein localises to the cell inner membrane. Produces ATP from ADP in the presence of a proton gradient across the membrane. The protein is ATP synthase epsilon chain of Helicobacter pylori (strain G27).